We begin with the raw amino-acid sequence, 327 residues long: Arabinose 5-phosphate isomerase KpsF (327 aa).

One can recognise an SIS domain in the interval 48–191; that stretch reads VLNLIMNCKG…AIAMIHQRKF (144 aa). An ATP-binding site is contributed by 63–68; that stretch reads GMGKSG. Residues 82–83, His-89, His-95, 121–130, and 155–157 contribute to the substrate site; these read GT, KLVPSLKNFG, and HMA. His-89 serves as a coordination point for Zn(2+). CBS domains follow at residues 217 to 273 and 282 to 327; these read MQHD…EGSL and MTRE…RIFD.

As to quaternary structure, homotetramer.

The enzyme catalyses D-arabinose 5-phosphate = D-ribulose 5-phosphate. Its activity is regulated as follows. Inhibited by 10 uM zinc, cadmium or mercury ions. Involved in the biosynthesis of K-antigen capsules. Catalyzes the reversible aldol-ketol isomerization between D-ribulose 5-phosphate (Ru5P) and D-arabinose 5-phosphate (A5P). This Escherichia coli O6:H1 (strain CFT073 / ATCC 700928 / UPEC) protein is Arabinose 5-phosphate isomerase KpsF.